Consider the following 1055-residue polypeptide: Elongation factor 3 (1055 aa).

ADP is bound at residue V45. HEAT repeat units lie at residues 45-86, 96-133, 135-172, 175-213, 217-255, 257-290, and 295-337; these read VEFF…NGAA, SAEN…SMNP, ASFV…SAPY, GEAM…LVEN, EKFV…APTI, LIAP…LVDS, and RPFL…VPVE. 2 ABC transporter domains span residues 447–659 and 687–1004; these read CNIE…SYYQ and LKMR…KKAG. Residues N723, E933, N936, and H962 each contribute to the ADP site. Disordered stretches follow at residues 987–1006 and 1024–1055; these read HNWV…AGDD and EKKL…DEEL. Residues 1033 to 1044 show a composition bias toward basic residues; it reads RKAKKDRMARRK.

It belongs to the ABC transporter superfamily. ABCF family. EF3 subfamily. As to quaternary structure, associates with ribosomes.

Its subcellular location is the cytoplasm. It localises to the cytosol. It catalyses the reaction ATP + H2O = ADP + phosphate + H(+). Its pathway is protein biosynthesis; polypeptide chain elongation. Ribosome-dependent ATPase that functions in cytoplasmic translation elongation. Required for the ATP-dependent release of deacylated tRNA from the ribosomal E-site during protein biosynthesis. Stimulates the eEF1A-dependent binding of aminoacyl-tRNA to the ribosomal A-site, which has reduced affinity for tRNA as long as the E-site is occupied. Assists translation termination by stimulating the release of nascent protein from the ribosome by release factors. Appears to target calcium-channel protein CCH1 to the plasma membrane. The polypeptide is Elongation factor 3 (Cryptococcus neoformans var. neoformans serotype D (strain JEC21 / ATCC MYA-565) (Filobasidiella neoformans)).